A 1439-amino-acid polypeptide reads, in one-letter code: Microtubule organization protein AKNA (1439 aa).

Basic and acidic residues-rich tracts occupy residues 1–10 (MASSETEIRW) and 25–35 (AWAEDKRDVDR). Positions 1–394 (MASSETEIRW…NRKPQAPARP (394 aa)) are disordered. Serine 52 carries the post-translational modification Phosphoserine. Positions 71-83 (WDPHPQPDGHQDS) are enriched in basic and acidic residues. A compositionally biased stretch (acidic residues) spans 89 to 99 (SGEEAEAEDVD). A compositionally biased stretch (polar residues) spans 263 to 275 (QDSSAPPAQSPQH). The segment covering 276–285 (ATDRWRRETT) has biased composition (basic and acidic residues). Phosphoserine is present on residues serine 316, serine 499, and serine 534. Disordered regions lie at residues 507 to 562 (SAEW…SAEQ) and 659 to 682 (IDQT…PALP). Residues 533–544 (LSPSSLTSMPTL) show a composition bias toward low complexity. Serine 767 and serine 770 each carry phosphoserine. Residues 771–804 (LPEAMRMEEEEEGEEEEEEEGGGDSLEVDGVAAT) form a PEST region. Disordered stretches follow at residues 775–942 (MRME…QTPE) and 977–1005 (IPRR…LRQR). Over residues 778–792 (EEEEEGEEEEEEEGG) the composition is skewed to acidic residues. At serine 848 the chain carries Phosphoserine. The span at 865-875 (PPGPGVPPHPP) shows a compositional bias: pro residues. 3 stretches are compositionally biased toward polar residues: residues 879–891 (SAAS…TSLE), 929–940 (SETSRVSPLTQT), and 983–999 (EPST…SSPS). Residue serine 886 is modified to Phosphoserine. Residues 911–932 (HLEETWMASPETDSGFVGSETS) form a PEST region. Residues serine 997 and serine 1010 each carry the phosphoserine modification. The segment at 1095–1165 (LHQPLQGSPT…RARSSSVPRE (71 aa)) is disordered. The segment at residues 1115 to 1123 (RTRGRPADS) is a DNA-binding region (a.T hook). Positions 1135–1147 (STERLPGEPRGEE) are enriched in basic and acidic residues. A phosphoserine mark is found at serine 1172 and serine 1173. The interval 1180–1211 (LPLFSEKSKTTKDSPQAARDGKRGVGSAGWPD) is disordered. Serine 1228 bears the Phosphoserine mark. The interval 1252–1329 (AGGAVTGDPL…RPPPGLWYLA (78 aa)) is disordered. The span at 1303-1317 (SSTPSPKQRSKQAGS) shows a compositional bias: polar residues. Phosphoserine occurs at positions 1377, 1387, and 1424.

It belongs to the AKNA family. In terms of assembly, interacts with DCTN1. Interacts with MAPRE1/EB1. Interacts with ODF2. Interacts with CAMSAP3. Post-translationally, phosphorylated; phosphorylation regulates dissociation from and reassembly at the centrosome. As to expression, predominantly expressed by lymphoid tissues. Highly expressed in the spleen, lymph nodes and peripheral blood leukocytes, expressed at lower level in the thymus. Mainly expressed by germinal center B-lymphocytes, a stage in which receptor and ligand interactions are crucial for B-lymphocyte maturation. Expressed by B- and T-lymphocytes, Natural killer cells and CD1a(+)CD14(-) but not CD1a(-)CD14(+) dendritic cells. Weakly or not expressed in fetal liver and in adult bone marrow.

Its subcellular location is the cytoplasm. It is found in the cytoskeleton. The protein localises to the microtubule organizing center. It localises to the centrosome. The protein resides in the centriole. Its subcellular location is the nucleus. Functionally, centrosomal protein that plays a key role in cell delamination by regulating microtubule organization. Required for the delamination and retention of neural stem cells from the subventricular zone during neurogenesis. Also regulates the epithelial-to-mesenchymal transition in other epithelial cells. Acts by increasing centrosomal microtubule nucleation and recruiting nucleation factors and minus-end stabilizers, thereby destabilizing microtubules at the adherens junctions and mediating constriction of the apical endfoot. In addition, may also act as a transcription factor that specifically activates the expression of the CD40 receptor and its ligand CD40L/CD154, two cell surface molecules on lymphocytes that are critical for antigen-dependent-B-cell development. Binds to A/T-rich promoters. It is unclear how it can both act as a microtubule organizer and as a transcription factor; additional evidences are required to reconcile these two apparently contradictory functions. The chain is Microtubule organization protein AKNA from Homo sapiens (Human).